Here is a 226-residue protein sequence, read N- to C-terminus: Sugar transporter SWEET1 (226 aa).

A run of 7 helical transmembrane segments spans residues 8–28 (LLST…AMIC), 42–62 (GVPF…GVLT), 67–87 (IVLV…IYYV), 94–114 (AFVR…VVYT), 127–147 (ITGI…LATL), 161–181 (LPLI…GILI), and 185–205 (FIQI…SLFV). Residues 8-92 (LLSTTAVIST…LIYYVFTVNK (85 aa)) enclose the MtN3/slv 1 domain. One can recognise a MtN3/slv 2 domain in the interval 129-210 (GIFCCIVTVC…LSLFVVYPPR (82 aa)).

Belongs to the SWEET sugar transporter family.

The protein localises to the golgi apparatus membrane. Its subcellular location is the cell membrane. Functionally, mediates both low-affinity uptake and efflux of sugar across the membrane. The polypeptide is Sugar transporter SWEET1 (slv) (Drosophila pseudoobscura pseudoobscura (Fruit fly)).